Reading from the N-terminus, the 484-residue chain is Sulfoacetaldehyde dehydrogenase (484 aa).

Residues 105 to 110 (LTPVTN), G188, and G206 contribute to the NAD(+) site. The active-site Nucleophile is C239. NAD(+)-binding residues include E332 and L412.

The protein belongs to the aldehyde dehydrogenase family.

It carries out the reaction sulfoacetaldehyde + NAD(+) + CoA = sulfoacetyl-CoA + NADH + H(+). In terms of biological role, part of a variant of the sulfo-TK pathway, a D-sulfoquinovose degradation pathway that produces sulfoacetate. Catalyzes the oxidation of sulfoacetaldehyde (SA) to sulfoacetyl-coenzyme A (sulfoacetyl-CoA). Is highly specific for NAD(+), with only residual (1%) activity with NADP(+). Cannot use acetaldehyde. This is Sulfoacetaldehyde dehydrogenase from Acholeplasma sp.